We begin with the raw amino-acid sequence, 288 residues long: Acetyl-coenzyme A carboxylase carboxyl transferase subunit beta (288 aa).

The CoA carboxyltransferase N-terminal domain maps to 34–288 (LFAKCPACKH…HLVAFHGGGQ (255 aa)). Residues Cys-38, Cys-41, Cys-56, and Cys-59 each coordinate Zn(2+). Residues 38 to 59 (CPACKHMIYKKDLGLAKICPTC) form a C4-type zinc finger.

This sequence belongs to the AccD/PCCB family. In terms of assembly, acetyl-CoA carboxylase is a heterohexamer composed of biotin carboxyl carrier protein (AccB), biotin carboxylase (AccC) and two subunits each of ACCase subunit alpha (AccA) and ACCase subunit beta (AccD). Zn(2+) is required as a cofactor.

Its subcellular location is the cytoplasm. It catalyses the reaction N(6)-carboxybiotinyl-L-lysyl-[protein] + acetyl-CoA = N(6)-biotinyl-L-lysyl-[protein] + malonyl-CoA. The protein operates within lipid metabolism; malonyl-CoA biosynthesis; malonyl-CoA from acetyl-CoA: step 1/1. Component of the acetyl coenzyme A carboxylase (ACC) complex. Biotin carboxylase (BC) catalyzes the carboxylation of biotin on its carrier protein (BCCP) and then the CO(2) group is transferred by the transcarboxylase to acetyl-CoA to form malonyl-CoA. This chain is Acetyl-coenzyme A carboxylase carboxyl transferase subunit beta, found in Streptococcus pyogenes serotype M3 (strain ATCC BAA-595 / MGAS315).